The sequence spans 367 residues: Germination protease (367 aa).

Residues 1-15 constitute a propeptide that is removed on maturation; sequence MKEPLDLSKYAVRTD.

Belongs to the peptidase A25 family. In terms of assembly, homotetramer. Post-translationally, autoproteolytically processed. The inactive tetrameric zymogen termed p46 autoprocesses to a smaller form termed p41, which is active only during spore germination.

It catalyses the reaction Endopeptidase action with P4 Glu or Asp, P1 preferably Glu &gt; Asp, P1' hydrophobic and P2' Ala.. Its function is as follows. Initiates the rapid degradation of small, acid-soluble proteins during spore germination. The chain is Germination protease from Bacillus cytotoxicus (strain DSM 22905 / CIP 110041 / 391-98 / NVH 391-98).